The chain runs to 251 residues: 2,3-bisphosphoglycerate-dependent phosphoglycerate mutase (251 aa).

Substrate contacts are provided by residues 11-18, 24-25, arginine 63, 90-93, lysine 101, 117-118, and 185-186; these read RHGNSDWN, TG, ERHY, RR, and GN. Histidine 12 (tele-phosphohistidine intermediate) is an active-site residue. Glutamate 90 functions as the Proton donor/acceptor in the catalytic mechanism. Positions 117–142 are disordered; that stretch reads RRSFDVPPPPIDDDDEYSQSRDPRYA.

This sequence belongs to the phosphoglycerate mutase family. BPG-dependent PGAM subfamily.

The enzyme catalyses (2R)-2-phosphoglycerate = (2R)-3-phosphoglycerate. It functions in the pathway carbohydrate degradation; glycolysis; pyruvate from D-glyceraldehyde 3-phosphate: step 3/5. In terms of biological role, catalyzes the interconversion of 2-phosphoglycerate and 3-phosphoglycerate. The protein is 2,3-bisphosphoglycerate-dependent phosphoglycerate mutase of Clavibacter michiganensis subsp. michiganensis (strain NCPPB 382).